The sequence spans 414 residues: tRNA methyltransferase 10 homolog C (414 aa).

The N-terminal 35 residues, 1–35 (MNVTVRFLRPFARCLVPYTFHRKRSHLYSGVLQRY), are a transit peptide targeting the mitochondrion. S79 is subject to Phosphoserine. Residues 133–171 (GKEKAKKAKQVKKEMKAEAREEAKRARLLETTAEEQQQD) adopt a coiled-coil conformation. The SAM-dependent MTase TRM10-type domain occupies 186–378 (LGWKGVQAMQ…KFVPRRKHTG (193 aa)).

The protein belongs to the class IV-like SAM-binding methyltransferase superfamily. TRM10 family. Component of mitochondrial ribonuclease P, a complex composed of TRMT10C/MRPP1, HSD17B10/MRPP2 and PRORP/MRPP3. Interacts with HSD17B10/MRPP2; forming the MRPP1-MRPP2 subcomplex of the mitochondrial ribonuclease P complex. Interacts with GRSF1.

It localises to the mitochondrion matrix. The protein localises to the mitochondrion nucleoid. The enzyme catalyses adenosine(9) in tRNA + S-adenosyl-L-methionine = N(1)-methyladenosine(9) in tRNA + S-adenosyl-L-homocysteine + H(+). The catalysed reaction is guanosine(9) in tRNA + S-adenosyl-L-methionine = N(1)-methylguanosine(9) in tRNA + S-adenosyl-L-homocysteine + H(+). It carries out the reaction an adenosine in mRNA + S-adenosyl-L-methionine = an N(1)-methyladenosine in mRNA + S-adenosyl-L-homocysteine + H(+). Functionally, mitochondrial tRNA N(1)-methyltransferase involved in mitochondrial tRNA maturation. Component of mitochondrial ribonuclease P, a complex composed of TRMT10C/MRPP1, HSD17B10/MRPP2 and PRORP/MRPP3, which cleaves tRNA molecules in their 5'-ends. Together with HSD17B10/MRPP2, forms a subcomplex of the mitochondrial ribonuclease P, named MRPP1-MRPP2 subcomplex, which displays functions that are independent of the ribonuclease P activity. The MRPP1-MRPP2 subcomplex catalyzes the formation of N(1)-methylguanine and N(1)-methyladenine at position 9 (m1G9 and m1A9, respectively) in tRNAs; TRMT10C/MRPP1 acting as the catalytic N(1)-methyltransferase subunit. The MRPP1-MRPP2 subcomplex also acts as a tRNA maturation platform: following 5'-end cleavage by the mitochondrial ribonuclease P complex, the MRPP1-MRPP2 subcomplex enhances the efficiency of 3'-processing catalyzed by ELAC2, retains the tRNA product after ELAC2 processing and presents the nascent tRNA to the mitochondrial CCA tRNA nucleotidyltransferase TRNT1 enzyme. In addition to tRNA N(1)-methyltransferase activity, TRMT10C/MRPP1 also acts as a mRNA N(1)-methyltransferase by mediating methylation of adenosine residues at the N(1) position of MT-ND5 mRNA. Associates with mitochondrial DNA complexes at the nucleoids to initiate RNA processing and ribosome assembly. In Mus musculus (Mouse), this protein is tRNA methyltransferase 10 homolog C.